Reading from the N-terminus, the 176-residue chain is Shikimate kinase (176 aa).

Residue 17–24 (GMMGVGKS) coordinates ATP.

It belongs to the shikimate kinase family.

The protein resides in the cytoplasm. It catalyses the reaction shikimate + ATP = 3-phosphoshikimate + ADP + H(+). Its pathway is metabolic intermediate biosynthesis; chorismate biosynthesis; chorismate from D-erythrose 4-phosphate and phosphoenolpyruvate: step 5/7. This chain is Shikimate kinase, found in Zymomonas mobilis subsp. mobilis (strain ATCC 31821 / ZM4 / CP4).